Here is a 98-residue protein sequence, read N- to C-terminus: Small ribosomal subunit protein eS24 (98 aa).

This sequence belongs to the eukaryotic ribosomal protein eS24 family.

This Thermococcus sibiricus (strain DSM 12597 / MM 739) protein is Small ribosomal subunit protein eS24.